The primary structure comprises 42 residues: Serine/threonine-protein phosphatase 5 (42 aa).

Residues 38–42 form a required for autoinhibition region; the sequence is QLGVM.

It belongs to the PPP phosphatase family. PP-5 (PP-T) subfamily. As to quaternary structure, probably forms a complex composed of chaperones HSP90 and HSP70, co-chaperones STIP1/HOP, CDC37, PPP5C, PTGES3/p23, TSC1 and client protein TSC2. Probably forms a complex composed of chaperones HSP90 and HSP70, co-chaperones CDC37, PPP5C, TSC1 and client protein TSC2, CDK4, AKT, RAF1 and NR3C1; this complex does not contain co-chaperones STIP1/HOP and PTGES3/p23. Part of a complex with HSP90/HSP90AA1 and steroid receptors. Interacts (via TPR repeats) with HSP90AA1 (via TPR repeat-binding motif) or HSPA1A/HSPA1B; the interaction is direct and activates the phosphatase activity. Dissociates from HSPA1A/HSPA1B and HSP90AA1 in response to arachidonic acid. Interacts with CPNE1 (via VWFA domain). Interacts with CDC16, CDC27. Interacts with KLHDC10 (via the 6 Kelch repeats); inhibits the phosphatase activity on MAP3K5. Interacts with ATM and ATR; both interactions are induced by DNA damage and enhance ATM and ATR kinase activity. Interacts with RAD17; reduced by DNA damage. Interacts with nuclear receptors such as NR3C1/GCR and PPARG (activated by agonist); regulates their transactivation activities. Interacts (via TPR repeats) with S100 proteins S100A1, S100A2, S100A6, S100B and S100P; the interactions are calcium-dependent, strongly activate PPP5C phosphatase activity and compete with HSP90AA1 and MAP3K5 interactions. Interacts with SMAD2 and SMAD3 but not with SMAD1; decreases SMAD3 phosphorylation and protein levels. Interacts (via TPR repeats) with CRY1 and CRY2; the interaction with CRY2 down-regulates the phosphatase activity on CSNK1E. Interacts (via TPR repeats) with the active form of RAC1, GNA12 or GNA13; these interactions activate the phosphatase activity and translocate PPP5C to the cell membrane. Interacts with FLCN. Requires Mg(2+) as cofactor. Mn(2+) is required as a cofactor. In terms of processing, activated by at least two different proteolytic cleavages producing a 56 kDa and a 50 kDa form.

It is found in the nucleus. It localises to the cytoplasm. Its subcellular location is the cell membrane. The catalysed reaction is O-phospho-L-seryl-[protein] + H2O = L-seryl-[protein] + phosphate. It carries out the reaction O-phospho-L-threonyl-[protein] + H2O = L-threonyl-[protein] + phosphate. Its activity is regulated as follows. Autoinhibited. In the autoinhibited state, the TPR domain interacts with the catalytic region and prevents substrate access to the catalytic pocket. Allosterically activated by various polyunsaturated fatty acids, free long-chain fatty-acids and long-chain fatty acyl-CoA esters, arachidonic acid being the most effective activator. HSP90A and probably RAC1, GNA12 and GNA13 can also release the autoinhibition by the TPR repeat. Activation by RAC1, GNA12 and GNA13 is synergistic with the one produced by fatty acids binding. Inhibited by okadaic acid. Serine/threonine-protein phosphatase that dephosphorylates a myriad of proteins involved in different signaling pathways including the kinases CSNK1E, ASK1/MAP3K5, PRKDC and RAF1, the nuclear receptors NR3C1, PPARG, ESR1 and ESR2, SMAD proteins and TAU/MAPT. Implicated in wide ranging cellular processes, including apoptosis, differentiation, DNA damage response, cell survival, regulation of ion channels or circadian rhythms, in response to steroid and thyroid hormones, calcium, fatty acids, TGF-beta as well as oxidative and genotoxic stresses. Participates in the control of DNA damage response mechanisms such as checkpoint activation and DNA damage repair through, for instance, the regulation ATM/ATR-signaling and dephosphorylation of PRKDC and TP53BP1. Inhibits ASK1/MAP3K5-mediated apoptosis induced by oxidative stress. Plays a positive role in adipogenesis, mainly through the dephosphorylation and activation of PPARG transactivation function. Also dephosphorylates and inhibits the anti-adipogenic effect of NR3C1. Regulates the circadian rhythms, through the dephosphorylation and activation of CSNK1E. May modulate TGF-beta signaling pathway by the regulation of SMAD3 phosphorylation and protein expression levels. Dephosphorylates and may play a role in the regulation of TAU/MAPT. Through their dephosphorylation, may play a role in the regulation of ions channels such as KCNH2. Dephosphorylate FNIP1, disrupting interaction with HSP90AA1/Hsp90. This is Serine/threonine-protein phosphatase 5 (PPP5C) from Oryctolagus cuniculus (Rabbit).